The following is a 264-amino-acid chain: MKIALGIEYNGTHYFGWQRQRDVKSVQEELEKALSVVANHPVEVMCAGRTDAGVHGTGQVVHFETNVDRKMVAWTMGANANMPKDIAVRWATEVNEDFHARFSATARRYRYIIFNHALRPGILNSGVSHYHGHLDEKKMHEAGQYLLGENDFTSFRATHCQSRSPWRNMIHLNVTRHGHYIVIDIKANAFVHHMVRNITGSLIAVGKGDQKPEWIQWLLEAKDRKVAGATAKAEGLYLVDVDYPEHFGLPREPIGPLFLPDNLN.

Asp51 serves as the catalytic Nucleophile. Residue Tyr109 coordinates substrate.

This sequence belongs to the tRNA pseudouridine synthase TruA family. As to quaternary structure, homodimer.

It carries out the reaction uridine(38/39/40) in tRNA = pseudouridine(38/39/40) in tRNA. In terms of biological role, formation of pseudouridine at positions 38, 39 and 40 in the anticodon stem and loop of transfer RNAs. The protein is tRNA pseudouridine synthase A of Vibrio atlanticus (strain LGP32) (Vibrio splendidus (strain Mel32)).